Consider the following 550-residue polypeptide: MTKYVFVTGGVVSSLGKGIAAASLAAILESRGLKVTLLKLDPYINVDPGTMSPFQHGEVFVTEDGAETDLDLGHYERFISTKMRKANNFTTGQIYESVIRKERRGDYLGKTVQVIPHITNEIQAFIERGAASATCGEPDVAIVEIGGTVGDIESLPFLEAARQMSLRLGRNSACFVHLTLVPYVATAGELKTKPTQHSVQKLREIGILPHVLLCRADRRIPDDESKKISMFSNVPEDAVISVWDADSIYKIPQMLHDQGLDRIICEELKLSPKDADLTMWSELVEKLENPKHEVTIGMVGKYVDLTESYKSLIEALRHASLHTSTKVNIEYIDSEEIETNGVDSLKHLDAVLVPGGFGRRGTEGKIAAIRYAREAKVPYLGICLGMQLAVIEFARNVVGLKQANSTEFEPDTPERVVALITEWYDRDGKVETRTEESDLGGTMRLGSQRCPIKPGTMAEEIYGKDVNERHRHRYEVNNRFVPQLEAGGLIISARTPSEDLPEMMELPRSMHPWFVGVQFHPEFTSTPRDGHPLFKSFVEAALANKQARGV.

Positions 1-270 are amidoligase domain; it reads MTKYVFVTGG…DRIICEELKL (270 aa). Ser-13 lines the CTP pocket. Ser-13 is a binding site for UTP. Residues 14-19 and Asp-71 each bind ATP; that span reads SLGKGI. Asp-71 and Glu-144 together coordinate Mg(2+). Residues 151–153, 191–196, and Lys-227 contribute to the CTP site; these read DIE and KTKPTQ. Residues 191-196 and Lys-227 contribute to the UTP site; that span reads KTKPTQ. Residues 295 to 547 enclose the Glutamine amidotransferase type-1 domain; sequence TIGMVGKYVD…VEAALANKQA (253 aa). Residue Gly-356 coordinates L-glutamine. The Nucleophile; for glutamine hydrolysis role is filled by Cys-383. Residues 384-387, Glu-407, and Arg-473 contribute to the L-glutamine site; that span reads LGMQ. Catalysis depends on residues His-520 and Glu-522.

It belongs to the CTP synthase family. Homotetramer.

The catalysed reaction is UTP + L-glutamine + ATP + H2O = CTP + L-glutamate + ADP + phosphate + 2 H(+). The enzyme catalyses L-glutamine + H2O = L-glutamate + NH4(+). It catalyses the reaction UTP + NH4(+) + ATP = CTP + ADP + phosphate + 2 H(+). The protein operates within pyrimidine metabolism; CTP biosynthesis via de novo pathway; CTP from UDP: step 2/2. Its activity is regulated as follows. Allosterically activated by GTP, when glutamine is the substrate; GTP has no effect on the reaction when ammonia is the substrate. The allosteric effector GTP functions by stabilizing the protein conformation that binds the tetrahedral intermediate(s) formed during glutamine hydrolysis. Inhibited by the product CTP, via allosteric rather than competitive inhibition. Functionally, catalyzes the ATP-dependent amination of UTP to CTP with either L-glutamine or ammonia as the source of nitrogen. Regulates intracellular CTP levels through interactions with the four ribonucleotide triphosphates. This Burkholderia lata (strain ATCC 17760 / DSM 23089 / LMG 22485 / NCIMB 9086 / R18194 / 383) protein is CTP synthase.